Consider the following 841-residue polypeptide: Alpha-glucan phosphorylase 2, cytosolic (841 aa).

The interval 1 to 24 (MANANGKAATSLPEKISAKANPEA) is disordered. Residue K687 is modified to N6-(pyridoxal phosphate)lysine.

This sequence belongs to the glycogen phosphorylase family. Pyridoxal 5'-phosphate is required as a cofactor.

Its subcellular location is the cytoplasm. The catalysed reaction is [(1-&gt;4)-alpha-D-glucosyl](n) + phosphate = [(1-&gt;4)-alpha-D-glucosyl](n-1) + alpha-D-glucose 1-phosphate. Its function is as follows. Phosphorylase is an important allosteric enzyme in carbohydrate metabolism. Enzymes from different sources differ in their regulatory mechanisms and in their natural substrates. However, all known phosphorylases share catalytic and structural properties. In Arabidopsis thaliana (Mouse-ear cress), this protein is Alpha-glucan phosphorylase 2, cytosolic (PHS2).